Here is a 159-residue protein sequence, read N- to C-terminus: Ribosomal RNA large subunit methyltransferase H (159 aa).

Residues Leu76, Gly108, and 127–132 contribute to the S-adenosyl-L-methionine site; that span reads FSKMTF.

This sequence belongs to the RNA methyltransferase RlmH family. Homodimer.

The protein localises to the cytoplasm. It carries out the reaction pseudouridine(1915) in 23S rRNA + S-adenosyl-L-methionine = N(3)-methylpseudouridine(1915) in 23S rRNA + S-adenosyl-L-homocysteine + H(+). Its function is as follows. Specifically methylates the pseudouridine at position 1915 (m3Psi1915) in 23S rRNA. The sequence is that of Ribosomal RNA large subunit methyltransferase H from Clostridium tetani (strain Massachusetts / E88).